Reading from the N-terminus, the 547-residue chain is ATP synthase subunit beta, mitochondrial (547 aa).

The transit peptide at 1 to 45 (MASRRLLSSFLRSSTRRSLRPSFSNPRPSFLTSYCSSPASILRRY) directs the protein to the mitochondrion. Residues 52 to 62 (KEPAASKPAGT) are compositionally biased toward low complexity. The tract at residues 52–74 (KEPAASKPAGTAGTGKGTITDEK) is disordered. Residue 226–233 (GGDWVGKT) participates in ATP binding.

The protein belongs to the ATPase alpha/beta chains family. In terms of assembly, F-type ATPases have 2 components, CF(1) - the catalytic core - and CF(0) - the membrane proton channel. CF(1) has five subunits: alpha(3), beta(3), gamma(1), delta(1), epsilon(1). CF(0) has three main subunits: a, b and c.

The protein resides in the mitochondrion. It localises to the mitochondrion inner membrane. It catalyses the reaction ATP + H2O + 4 H(+)(in) = ADP + phosphate + 5 H(+)(out). Its function is as follows. Mitochondrial membrane ATP synthase (F(1)F(0) ATP synthase or Complex V) produces ATP from ADP in the presence of a proton gradient across the membrane which is generated by electron transport complexes of the respiratory chain. F-type ATPases consist of two structural domains, F(1) - containing the extramembraneous catalytic core, and F(0) - containing the membrane proton channel, linked together by a central stalk and a peripheral stalk. During catalysis, ATP synthesis in the catalytic domain of F(1) is coupled via a rotary mechanism of the central stalk subunits to proton translocation. Subunits alpha and beta form the catalytic core in F(1). Rotation of the central stalk against the surrounding alpha(3)beta(3) subunits leads to hydrolysis of ATP in three separate catalytic sites on the beta subunits. In Daucus carota (Wild carrot), this protein is ATP synthase subunit beta, mitochondrial (ATPB).